The sequence spans 254 residues: GPI alpha-1,4-mannosyltransferase I, stabilizing subunit (254 aa).

The signal sequence occupies residues methionine 1 to alanine 22. The Lumenal portion of the chain corresponds to aspartate 23 to leucine 226. Asparagine 211 is a glycosylation site (N-linked (GlcNAc...) asparagine). A helical membrane pass occupies residues valine 227–phenylalanine 247. At lysine 248 to leucine 254 the chain is on the cytoplasmic side.

Belongs to the PIGX family. In terms of assembly, part of the glycosylphosphatidylinositol-mannosyltransferase I complex that is composed of PIGM and PIGX. Interacts with PIGM; PIGX stabilizes PIGM.

The protein resides in the endoplasmic reticulum membrane. It functions in the pathway glycolipid biosynthesis; glycosylphosphatidylinositol-anchor biosynthesis. Its function is as follows. Stabilizing subunit of the glycosylphosphatidylinositol-mannosyltransferase I complex which catalyzes the transfer of the first mannose, via an alpha-1,4 bond from a dolichol-phosphate-mannose (Dol-P-Man) to the glucosaminyl acyl phosphatidylinositol (GlcN-(acyl)PI) intermediate to generate alpha-D-Man-(1-&gt;4)-alpha-D-GlcN-(1-&gt;6)-(1-radyl,2-acyl-sn-glycero-3-phospho)-2-acyl-inositol and participates in the sixth step of the glycosylphosphatidylinositol-anchor biosynthesis. Probably acts by stabilizing the mannosyltransferase PIGM. This chain is GPI alpha-1,4-mannosyltransferase I, stabilizing subunit, found in Mus musculus (Mouse).